Reading from the N-terminus, the 238-residue chain is Ribose-5-phosphate isomerase A (238 aa).

Substrate is bound by residues 30-33 (SGST), 87-90 (DGAD), and 100-103 (KGGG). Catalysis depends on glutamate 109, which acts as the Proton acceptor. Lysine 127 provides a ligand contact to substrate.

This sequence belongs to the ribose 5-phosphate isomerase family. Homodimer.

The enzyme catalyses aldehydo-D-ribose 5-phosphate = D-ribulose 5-phosphate. It functions in the pathway carbohydrate degradation; pentose phosphate pathway; D-ribose 5-phosphate from D-ribulose 5-phosphate (non-oxidative stage): step 1/1. Its function is as follows. Catalyzes the reversible conversion of ribose-5-phosphate to ribulose 5-phosphate. The sequence is that of Ribose-5-phosphate isomerase A from Synechococcus sp. (strain WH7803).